Here is a 127-residue protein sequence, read N- to C-terminus: Mitochondrial pyruvate carrier 2 (127 aa).

Residues 2–40 lie on the Mitochondrial matrix side of the membrane; that stretch reads SAAGARGLRATYHRLLDKVELMLPEKLRPLYNHPAGPRT. The chain crosses the membrane as a helical span at residues 41 to 61; the sequence is VFFWAPIMKWGLVCAGLADMA. Topologically, residues 62-72 are mitochondrial intermembrane; it reads RPAEKLSTAQS. A helical transmembrane segment spans residues 73-90; it reads AVLMATGFIWSRYSLVII. The Mitochondrial matrix portion of the chain corresponds to 91-95; the sequence is PKNWS. The chain crosses the membrane as a helical span at residues 96–115; the sequence is LFAVNFFVGAAGASQLFRIW. Residues 116–127 are Mitochondrial intermembrane-facing; sequence RYNQELKAKAHK.

This sequence belongs to the mitochondrial pyruvate carrier (MPC) (TC 2.A.105) family. As to quaternary structure, homodimer. Homooligomer. Forms heterodimers with MPC1 and MPC1L. The heterodimer is the more stable and dominant form.

The protein localises to the mitochondrion inner membrane. It carries out the reaction pyruvate(out) + H(+)(out) = pyruvate(in) + H(+)(in). Mediates the uptake of pyruvate into mitochondria. This chain is Mitochondrial pyruvate carrier 2 (MPC2), found in Homo sapiens (Human).